The primary structure comprises 248 residues: MAKTLAQGRKPGSGRKPGKGKTLREGRKPGSGRRRRQDTGGKETDGSQQDQESRLISSRDMEAVDALRELTHSPSSHSAHNSSAAPPPHAAAASTSLPPSLDYTHQSFMDQQQQQQQQQQQQLLQQQRVDVVPPKPFITHKILLSSTGNSGGHVNSNYNADHSINHNSNHNLNSNVNVNMNFTINGSNQDPSSSFLMGPYNYLQRPFIVKPYLDLSTSTAASNQPRTQPSPAAHITKNSDSTEKNATI.

The DNA-binding element occupies 1–36 (MAKTLAQGRKPGSGRKPGKGKTLREGRKPGSGRRRR). 2 disordered regions span residues 1–127 (MAKT…LQQQ) and 219–248 (TAASNQPRTQPSPAAHITKNSDSTEKNATI). 3 repeat units span residues 8-12 (GRKPG), 14-18 (GRKPG), and 26-30 (GRKPG). The 3 X 5 AA repeats of G-R-K-P-G stretch occupies residues 8 to 30 (GRKPGSGRKPGKGKTLREGRKPG). Residues 12–21 (GSGRKPGKGK) are compositionally biased toward basic residues. Basic and acidic residues predominate over residues 37 to 71 (QDTGGKETDGSQQDQESRLISSRDMEAVDALRELT). Composition is skewed to low complexity over residues 72–100 (HSPSSHSAHNSSAAPPPHAAAASTSLPPS) and 111–127 (QQQQQQQQQQQQLLQQQ).

As to quaternary structure, binds as a dimer or higher oligomer.

In terms of biological role, DNA-binding protein that recognizes oligo(A).oligo(T) tracts (A.T DNA). Can bind to any 11 bp sequence in which 10 bases conform to an uninterrupted oligo(A).oligo(T) tract. The chain is Oligo(A)/oligo(T)-binding protein (DAT1) from Saccharomyces cerevisiae (strain ATCC 204508 / S288c) (Baker's yeast).